The following is a 286-amino-acid chain: 4-hydroxy-tetrahydrodipicolinate synthase (286 aa).

Residue threonine 42 coordinates pyruvate. Tyrosine 129 (proton donor/acceptor) is an active-site residue. Catalysis depends on lysine 157, which acts as the Schiff-base intermediate with substrate. Valine 196 is a binding site for pyruvate.

The protein belongs to the DapA family. In terms of assembly, homotetramer; dimer of dimers.

The protein resides in the cytoplasm. It carries out the reaction L-aspartate 4-semialdehyde + pyruvate = (2S,4S)-4-hydroxy-2,3,4,5-tetrahydrodipicolinate + H2O + H(+). It functions in the pathway amino-acid biosynthesis; L-lysine biosynthesis via DAP pathway; (S)-tetrahydrodipicolinate from L-aspartate: step 3/4. Functionally, catalyzes the condensation of (S)-aspartate-beta-semialdehyde [(S)-ASA] and pyruvate to 4-hydroxy-tetrahydrodipicolinate (HTPA). The sequence is that of 4-hydroxy-tetrahydrodipicolinate synthase from Chlamydia muridarum (strain MoPn / Nigg).